Here is a 563-residue protein sequence, read N- to C-terminus: Kelch repeat and BTB domain-containing protein 1 (563 aa).

Positions 21–88 (CDINIVINDE…IYGIPLSLTN (68 aa)) constitute a BTB domain. The BACK domain maps to 123-219 (CIDFYIYADK…SLLSPQVIKS (97 aa)). 6 Kelch repeats span residues 252–297 (IELI…VLDN), 298–346 (IIYM…ADDE), 347–395 (YIYC…MLNG), 397–441 (IYVI…VHAG), 442–492 (KIYI…SAHN), and 494–538 (LYVG…CEPI).

Interacts (via BTB domain) with host CUL3.

Its subcellular location is the host cytoplasm. Its function is as follows. Probable substrate-specific adapter of CUL3-containing E3 ubiquitin-protein ligases which mediate the ubiquitination and subsequent proteasomal degradation of host target proteins. The sequence is that of Kelch repeat and BTB domain-containing protein 1 (KBTB1) from Cowpox virus (strain Brighton Red) (CPV).